The sequence spans 1132 residues: Phosphatidylinositide phosphatase SAC2 (1132 aa).

One can recognise an SAC domain in the interval 167–518 (LKMFMDSESF…GDSISRQYAG (352 aa)). A disordered region spans residues 250-269 (ESSDDDKSSPETPPQDSTCV). The region spanning 593–760 (RSHQELISQL…KSSKPHEDII (168 aa)) is the hSac2 domain. A phosphoserine mark is found at Ser714, Ser827, and Ser830. The interval 833 to 872 (TMENPGVMGNKVQGESDGDISSDNDSYHSDEFLTNSKSEE) is disordered. Basic and acidic residues predominate over residues 857–872 (DSYHSDEFLTNSKSEE). Residues Ser879, Ser882, Ser908, and Ser911 each carry the phosphoserine modification. Composition is skewed to polar residues over residues 908–918 (SASSIDVSTHA) and 994–1005 (RVSNEETQSEPM). Disordered regions lie at residues 908–951 (SASS…HTRT) and 981–1016 (VAQKSEEGSHKTNRVSNEETQSEPMGQTPPRPSQLN). Ser1103 is subject to Phosphoserine.

In terms of assembly, homodimer. Interacts with OCRL and RAB5. Interacts with INPP5B and INPP4A. Interacts with STAT3; the interaction is independent of STAT3 'Tyr-705' phosphorylation status. Highly expressed in brain and hypothalamus, expressed in lung and pancreas, and detected at low levels in liver and heart (at protein level).

The protein resides in the membrane. It localises to the clathrin-coated pit. It is found in the early endosome. Its subcellular location is the recycling endosome. The catalysed reaction is a myo-inositol phosphate + H2O = myo-inositol + phosphate. In terms of biological role, inositol 4-phosphatase which mainly acts on phosphatidylinositol 4-phosphate. May be functionally linked to OCRL, which converts phosphatidylinositol 4,5-bisphosphate to phosphatidylinositol, for a sequential dephosphorylation of phosphatidylinositol 4,5-bisphosphate at the 5 and 4 position of inositol, thus playing an important role in the endocytic recycling. Regulator of TF:TFRC and integrins recycling pathway, is also involved in cell migration mechanisms. Modulates AKT/GSK3B pathway by decreasing AKT and GSK3B phosphorylation. Negatively regulates STAT3 signaling pathway through inhibition of STAT3 phosphorylation and translocation to the nucleus. Functionally important modulator of cardiac myocyte size and of the cardiac response to stress. May play a role as negative regulator of axon regeneration after central nervous system injuries. This chain is Phosphatidylinositide phosphatase SAC2, found in Mus musculus (Mouse).